Reading from the N-terminus, the 533-residue chain is Probable anion transporter 4, chloroplastic (533 aa).

A run of 12 helical transmembrane segments spans residues 117 to 137 (MLAL…VAIV), 152 to 172 (IVQS…GTLV), 179 to 199 (VVMA…PWAA), 203 to 223 (LWAL…ALPC), 243 to 263 (IAMA…PILM), 267 to 287 (GIYG…LVWL), 342 to 362 (VIVA…WMPI), 376 to 396 (AWFS…AGFW), 417 to 437 (IGFI…QPLV), 438 to 458 (ASAW…GFLI), 474 to 494 (MCLT…GFFV), and 502 to 522 (GFIL…NIYA).

The protein belongs to the major facilitator superfamily. Sodium/anion cotransporter (TC 2.A.1.14) family. As to expression, expressed in leaf veins and root tips.

The protein resides in the plastid. It is found in the chloroplast membrane. In terms of biological role, inorganic phosphate and probable anion transporter. The sequence is that of Probable anion transporter 4, chloroplastic (ANTR4) from Arabidopsis thaliana (Mouse-ear cress).